The following is a 474-amino-acid chain: Protein CyaE (474 aa).

An N-terminal signal peptide occupies residues 1 to 31; it reads MAAVQVRRRGRALALALWAGFALSVGGGVRA.

Belongs to the outer membrane factor (OMF) (TC 1.B.17) family.

The protein localises to the cell outer membrane. In terms of biological role, cyaE is necessary for transport of calmodulin-sensitive adenylate cyclase-hemolysin (cyclolysin). This Bordetella pertussis (strain Tohama I / ATCC BAA-589 / NCTC 13251) protein is Protein CyaE (cyaE).